Reading from the N-terminus, the 267-residue chain is Hemin import ATP-binding protein HmuV (267 aa).

One can recognise an ABC transporter domain in the interval 3–243 (LEVRGIEVWR…ELVARVFGLR (241 aa)). 35–42 (GPNGAGKS) serves as a coordination point for ATP.

Belongs to the ABC transporter superfamily. Heme (hemin) importer (TC 3.A.1.14.5) family. In terms of assembly, the complex is composed of two ATP-binding proteins (HmuV), two transmembrane proteins (HmuU) and a solute-binding protein (HmuT).

It is found in the cell inner membrane. Functionally, part of the ABC transporter complex HmuTUV involved in hemin import. Responsible for energy coupling to the transport system. The polypeptide is Hemin import ATP-binding protein HmuV (Myxococcus xanthus (strain DK1622)).